Consider the following 108-residue polypeptide: Small ribosomal subunit protein eS25A (108 aa).

A compositionally biased stretch (low complexity) spans methionine 1–glycine 20. The tract at residues methionine 1–lysine 30 is disordered. N,N-dimethylproline; by NTM1 is present on proline 2. The segment covering lysine 21 to lysine 30 has biased composition (basic residues).

It belongs to the eukaryotic ribosomal protein eS25 family. As to quaternary structure, component of the small ribosomal subunit (SSU). Mature yeast ribosomes consist of a small (40S) and a large (60S) subunit. The 40S small subunit contains 1 molecule of ribosomal RNA (18S rRNA) and 33 different proteins (encoded by 57 genes). The large 60S subunit contains 3 rRNA molecules (25S, 5.8S and 5S rRNA) and 46 different proteins (encoded by 81 genes).

Its subcellular location is the cytoplasm. Functionally, component of the ribosome, a large ribonucleoprotein complex responsible for the synthesis of proteins in the cell. The small ribosomal subunit (SSU) binds messenger RNAs (mRNAs) and translates the encoded message by selecting cognate aminoacyl-transfer RNA (tRNA) molecules. The large subunit (LSU) contains the ribosomal catalytic site termed the peptidyl transferase center (PTC), which catalyzes the formation of peptide bonds, thereby polymerizing the amino acids delivered by tRNAs into a polypeptide chain. The nascent polypeptides leave the ribosome through a tunnel in the LSU and interact with protein factors that function in enzymatic processing, targeting, and the membrane insertion of nascent chains at the exit of the ribosomal tunnel. The sequence is that of Small ribosomal subunit protein eS25A from Saccharomyces cerevisiae (strain ATCC 204508 / S288c) (Baker's yeast).